The chain runs to 202 residues: Snake venom metalloproteinase leucurolysin-A (202 aa).

Gln1 bears the Pyrrolidone carboxylic acid mark. Residues 6 to 202 (RYIELVVVAD…HNPQCILNKP (197 aa)) enclose the Peptidase M12B domain. Glu9 and Asp93 together coordinate Ca(2+). Intrachain disulfides connect Cys117/Cys197, Cys157/Cys181, and Cys159/Cys164. Residue His142 coordinates Zn(2+). Residue Glu143 is part of the active site. 2 residues coordinate Zn(2+): His146 and His152. Cys197 and Asn200 together coordinate Ca(2+).

Belongs to the venom metalloproteinase (M12B) family. P-I subfamily. In terms of assembly, monomer. Zn(2+) serves as cofactor. Expressed by the venom gland.

Its subcellular location is the secreted. Inhibited by EDTA and 2-mercaptoethanol. Inhibited by 1 mM zinc ion and to a lesser extent by 1 mM calcium ion. Functionally, non-hemorrhagic metalloproteinase that hydrolyzes the alpha chains of fibrinogen, as well as fibrin, fibronectin and casein. Beta and gamma chains are also hydrolyzed, but more slowly. Thrombolytic activity is also observed. Induces detachment of endothelial cells followed by death, and inhibits endothelial cell adhesion to fibronectin. Induces edema in mouse paw. Inhibits ADP-induced platelet aggregation on human platelet-rich plasma with an IC(50) of 2.8 uM. This Bothrops leucurus (Whitetail lancehead) protein is Snake venom metalloproteinase leucurolysin-A.